A 110-amino-acid polypeptide reads, in one-letter code: MHVKTGDEVLIITGKDRGKRGKIKEARPKEQRVIVEGLNIVKRHMKPRGPTRPGGIIEMEAPIHVSNVMLICPTCGRASRTGHRFLEETDHKGRPKKVRYCKACDAVIDE.

It belongs to the universal ribosomal protein uL24 family. Part of the 50S ribosomal subunit.

One of two assembly initiator proteins, it binds directly to the 5'-end of the 23S rRNA, where it nucleates assembly of the 50S subunit. In terms of biological role, one of the proteins that surrounds the polypeptide exit tunnel on the outside of the subunit. The sequence is that of Large ribosomal subunit protein uL24 from Roseiflexus sp. (strain RS-1).